The chain runs to 302 residues: uncharacterized protein (302 aa).

Disordered regions lie at residues 81 to 100, 155 to 209, and 269 to 302; these read ETSD…ERAA, TVTG…PVNP, and LRIE…ALLN. Over residues 196–209 the composition is skewed to low complexity; it reads PSLPSSLVSSPVNP.

This is an uncharacterized protein from Ictalurid herpesvirus 1 (strain Auburn) (IcHV-1).